The primary structure comprises 686 residues: Epsin (686 aa).

The ENTH domain maps to 14-145 (DAVLNTPEIE…QDDQRIKEER (132 aa)). Disordered regions lie at residues 177–417 (YDSD…FNNN) and 463–571 (NSSM…TMRP). Polar residues predominate over residues 185–211 (NQRDSYGGNQRDSYGGNQRDSYGGNQR). A compositionally biased stretch (basic and acidic residues) spans 212–225 (ETTRRDSFNGRDEG). Residues 237–256 (SYDSDPYSNTRAEYENYSNR) show a composition bias toward polar residues. Composition is skewed to low complexity over residues 269–340 (SNNS…SGPS) and 383–417 (NNTN…FNNN). The segment covering 491–503 (FDQQSGDFSNKND) has biased composition (polar residues). The span at 504-521 (GQQKPKDTNDPWSKKDLF) shows a compositional bias: basic and acidic residues. A compositionally biased stretch (low complexity) spans 527-547 (GNQNPNQSPVNNTNNNNNGNT). The segment covering 558-567 (PITSAGSTIP) has biased composition (polar residues).

Belongs to the epsin family.

It localises to the membrane. It is found in the clathrin-coated pit. Functionally, binds to membranes enriched in phosphatidylinositol 4,5-bisphosphate (PtdIns(4,5)P2). In Dictyostelium discoideum (Social amoeba), this protein is Epsin (epnA).